Consider the following 280-residue polypeptide: L-aspartate dehydrogenase (280 aa).

2 residues coordinate NAD(+): A134 and N202. H232 is an active-site residue.

It belongs to the L-aspartate dehydrogenase family.

The catalysed reaction is L-aspartate + NADP(+) + H2O = oxaloacetate + NH4(+) + NADPH + H(+). It catalyses the reaction L-aspartate + NAD(+) + H2O = oxaloacetate + NH4(+) + NADH + H(+). It participates in cofactor biosynthesis; NAD(+) biosynthesis; iminoaspartate from L-aspartate (dehydrogenase route): step 1/1. Its function is as follows. Specifically catalyzes the NAD or NADP-dependent dehydrogenation of L-aspartate to iminoaspartate. The chain is L-aspartate dehydrogenase from Bradyrhizobium diazoefficiens (strain JCM 10833 / BCRC 13528 / IAM 13628 / NBRC 14792 / USDA 110).